The primary structure comprises 456 residues: UPF0496 protein 4 (456 aa).

The helical transmembrane segment at 205–221 (SVTVFVCSIFVAVLSGS) threads the bilayer.

Belongs to the ROH1 family.

The protein resides in the membrane. The polypeptide is UPF0496 protein 4 (Oryza sativa subsp. indica (Rice)).